The primary structure comprises 96 residues: Prokineticin Bv8 (96 aa).

The N-terminal stretch at 1–19 is a signal peptide; that stretch reads MKCFAQIVVLLLVIAFSHG. The tract at residues 20–24 is may be important for binding to prokineticin receptor 2; it reads AVITG. Cystine bridges form between Cys-26/Cys-38, Cys-32/Cys-50, Cys-37/Cys-78, Cys-60/Cys-86, and Cys-80/Cys-95.

In terms of tissue distribution, expressed by the skin glands.

It is found in the secreted. Functionally, potent agonist for both PKR1/PROKR1 and PKR2/PROKR2, and inducer of a potent and long-lasting hyperalgesia. Shows an EC(50) of 0.264 nM, when tested on neuroblastoma cells (SH-SY5Y) which endogenously express mainly PKR2/PROKR2. Also potentiates capsaicin-induced TRPV1 current, when tested on DRG neurons. Induces a biphasic hyperalgesia to tactile and thermal stimuli after systemic injection of this protein into rat. The initial phase of hyperalgesia is caused by a local action on nociceptors, because intraplantar injection of this protein causes a strong and localized hyperalgesia with a similar time course to that of the initial phase of hyperalgesia seen with systemic injection. The secondary phase of hyperalgesia is not seen with local intraplantar injection and is therefore probably attributable to a central action of this protein. At subnanomolar concentrations, this protein both induces potent chemotaxis of macrophages and stimulates LPS-induced production of the pro-inflammatory cytokines IL-1 and IL-12. In vivo, this protein potently stimulates the contraction of the guinea-pig gastrointestinal (GI) smooth muscle (at nanomolar concentration). The sequence is that of Prokineticin Bv8 from Bombina variegata (Yellow-bellied toad).